The primary structure comprises 172 residues: Adenine phosphoribosyltransferase (172 aa).

It belongs to the purine/pyrimidine phosphoribosyltransferase family. In terms of assembly, homodimer.

Its subcellular location is the cytoplasm. It carries out the reaction AMP + diphosphate = 5-phospho-alpha-D-ribose 1-diphosphate + adenine. It participates in purine metabolism; AMP biosynthesis via salvage pathway; AMP from adenine: step 1/1. Functionally, catalyzes a salvage reaction resulting in the formation of AMP, that is energically less costly than de novo synthesis. In Crocosphaera subtropica (strain ATCC 51142 / BH68) (Cyanothece sp. (strain ATCC 51142)), this protein is Adenine phosphoribosyltransferase.